The primary structure comprises 248 residues: UPF0736 protein ABC2536 (248 aa).

The protein belongs to the UPF0736 family.

The polypeptide is UPF0736 protein ABC2536 (Shouchella clausii (strain KSM-K16) (Alkalihalobacillus clausii)).